The primary structure comprises 361 residues: Nuclear pore complex protein NUP43 (361 aa).

The segment at 51–73 (IQSLDPNPRGNHNTNPLIESLSS) is disordered. WD repeat units lie at residues 132–173 (FHVG…YRKV), 177–215 (NGLVAYRAVKWASPTEFVTGGYGFGLQLWDQRKSGEAVS), and 225–265 (KTSA…QPIV).

As to quaternary structure, part of the nuclear pore complex (NPC). The NPC has an eight-fold symmetrical structure comprising a central transport channel and two rings, the cytoplasmic and nuclear rings, to which eight filaments are attached. The cytoplasmic filaments have loose ends, while the nuclear filaments are joined in a distal ring, forming a nuclear basket. NPCs are highly dynamic in configuration and composition, and can be devided in 3 subcomplexes, the NUP62 subcomplex, the NUP107-160 subcomplex and the NUP93 subcomplex, containing approximately 30 different nucleoporin proteins.

It localises to the nucleus envelope. It is found in the nucleus. The protein resides in the nuclear pore complex. The polypeptide is Nuclear pore complex protein NUP43 (Arabidopsis thaliana (Mouse-ear cress)).